A 379-amino-acid polypeptide reads, in one-letter code: tRNA 2-selenouridine synthase (379 aa).

The 124-residue stretch at 17-140 (FLSGAPLLDT…MRRFLIESLE (124 aa)) folds into the Rhodanese domain. Residue cysteine 100 is the S-selanylcysteine intermediate of the active site.

The protein belongs to the SelU family. Monomer.

The enzyme catalyses 5-methylaminomethyl-2-thiouridine(34) in tRNA + selenophosphate + (2E)-geranyl diphosphate + H2O + H(+) = 5-methylaminomethyl-2-selenouridine(34) in tRNA + (2E)-thiogeraniol + phosphate + diphosphate. It catalyses the reaction 5-methylaminomethyl-2-thiouridine(34) in tRNA + (2E)-geranyl diphosphate = 5-methylaminomethyl-S-(2E)-geranyl-thiouridine(34) in tRNA + diphosphate. The catalysed reaction is 5-methylaminomethyl-S-(2E)-geranyl-thiouridine(34) in tRNA + selenophosphate + H(+) = 5-methylaminomethyl-2-(Se-phospho)selenouridine(34) in tRNA + (2E)-thiogeraniol. It carries out the reaction 5-methylaminomethyl-2-(Se-phospho)selenouridine(34) in tRNA + H2O = 5-methylaminomethyl-2-selenouridine(34) in tRNA + phosphate. In terms of biological role, involved in the post-transcriptional modification of the uridine at the wobble position (U34) of tRNA(Lys), tRNA(Glu) and tRNA(Gln). Catalyzes the conversion of 2-thiouridine (S2U-RNA) to 2-selenouridine (Se2U-RNA). Acts in a two-step process involving geranylation of 2-thiouridine (S2U) to S-geranyl-2-thiouridine (geS2U) and subsequent selenation of the latter derivative to 2-selenouridine (Se2U) in the tRNA chain. This Hahella chejuensis (strain KCTC 2396) protein is tRNA 2-selenouridine synthase.